We begin with the raw amino-acid sequence, 2027 residues long: Mediator of RNA polymerase II transcription subunit 12 (2027 aa).

Tyrosine 13 carries the phosphotyrosine modification. Disordered stretches follow at residues 170–191, 474–516, 538–563, and 1088–1113; these read QSTS…TPST, GAPG…MDID, MPCE…PPKE, and TVTG…QGGR. A phosphoserine mark is found at serine 482, serine 512, serine 545, and serine 547. Positions 549-563 are enriched in basic and acidic residues; that stretch reads EKPDVEKEVKPPPKE. Residues serine 1105 and serine 1116 each carry the phosphoserine modification. The span at 1241–1258 shows a compositional bias: low complexity; that stretch reads AETGSSSGSTASNMPSSS. 3 disordered regions span residues 1241-1262, 1297-1321, and 1585-1676; these read AETG…KTKP, ELEK…KSMS, and YLEP…PGSI. 2 stretches are compositionally biased toward basic and acidic residues: residues 1297–1316 and 1605–1618; these read ELEK…DRQK and EPEK…KTDK. The interval 1463 to 1901 is interaction with CTNNB1 and GLI3; that stretch reads LAKKLQKELG…VRSTAILPEQ (439 aa). Positions 1631–1640 are enriched in basic residues; it reads KKSTKGKKRS. Lysine 1645 carries the N6-acetyllysine modification. Asymmetric dimethylarginine; alternate is present on arginine 1746. Arginine 1746 carries the post-translational modification Omega-N-methylarginine; alternate. Omega-N-methylarginine is present on arginine 1757. The segment at 1805–1848 is disordered; sequence QHTGPAGTMVPPSYSSQPYQSTHPSTNPTLVDPTRHLQQRPSGY. The segment covering 1815-1830 has biased composition (low complexity); sequence PPSYSSQPYQSTHPST. Asymmetric dimethylarginine is present on residues arginine 1844 and arginine 1865. 3 stretches are compositionally biased toward low complexity: residues 1965-1975, 1983-1999, and 2008-2021; these read QHQQQQQQQAA, SQPQ…QQQQ, and LQQQ…QPST. 2 disordered regions span residues 1965-1999 and 2008-2027; these read QHQQ…QQQQ and LQQQ…FGRY.

Belongs to the Mediator complex subunit 12 family. In terms of assembly, component of the Mediator complex, which is composed of MED1, MED4, MED6, MED7, MED8, MED9, MED10, MED11, MED12, MED13, MED13L, MED14, MED15, MED16, MED17, MED18, MED19, MED20, MED21, MED22, MED23, MED24, MED25, MED26, MED27, MED29, MED30, MED31, CCNC, CDK8 and CDC2L6/CDK11. The MED12, MED13, CCNC and CDK8 subunits form a distinct module termed the CDK8 module. Mediator containing the CDK8 module is less active than Mediator lacking this module in supporting transcriptional activation. Individual preparations of the Mediator complex lacking one or more distinct subunits have been variously termed ARC, CRSP, DRIP, PC2, SMCC and TRAP. Also interacts with CTNNB1 and GLI3.

The protein localises to the nucleus. Functionally, component of the Mediator complex, a coactivator involved in the regulated transcription of nearly all RNA polymerase II-dependent genes. Mediator functions as a bridge to convey information from gene-specific regulatory proteins to the basal RNA polymerase II transcription machinery. Mediator is recruited to promoters by direct interactions with regulatory proteins and serves as a scaffold for the assembly of a functional preinitiation complex with RNA polymerase II and the general transcription factors. This subunit may specifically regulate transcription of targets of the Wnt signaling pathway and SHH signaling pathway. The chain is Mediator of RNA polymerase II transcription subunit 12 (MED12) from Pan troglodytes (Chimpanzee).